Reading from the N-terminus, the 430-residue chain is Transcription factor iws-1 (430 aa).

The segment covering 1–14 has biased composition (low complexity); sequence MSDAASPAGSPAAE. The tract at residues 1–153 is disordered; sequence MSDAASPAGS…EENLTPDERR (153 aa). Basic and acidic residues predominate over residues 15 to 33; that stretch reads PTEHRDEDQVNETHQDDGS. The segment covering 52–63 has biased composition (acidic residues); it reads VLSEIDENEFGD. Positions 95–104 are enriched in basic residues; it reads KEGRRPKKRS. The span at 124–137 shows a compositional bias: basic and acidic residues; it reads VRAEGERRARKEVE. Residues 244–321 enclose the TFIIS N-terminal domain; that stretch reads QSVRYFLEPL…GEWSRLILKR (78 aa). The disordered stretch occupies residues 402–430; that stretch reads GQAPTDHRPIGHSGHEAFRRMTQKGKGKR. The segment covering 406–420 has biased composition (basic and acidic residues); it reads TDHRPIGHSGHEAFR.

This sequence belongs to the IWS1 family.

It is found in the nucleus. Functionally, transcription factor involved in RNA polymerase II transcription regulation. May function in both SPT15/TBP post-recruitment and recruitment steps of transcription. The polypeptide is Transcription factor iws-1 (iws-1) (Neurospora crassa (strain ATCC 24698 / 74-OR23-1A / CBS 708.71 / DSM 1257 / FGSC 987)).